A 263-amino-acid chain; its full sequence is RNA exonuclease 4 (263 aa).

Residues 1-27 are disordered; that stretch reads MRLSSNWSKLQDGVTKKAGKKRIDKKP. Residues 17 to 27 are compositionally biased toward basic residues; it reads KAGKKRIDKKP. The Exonuclease domain maps to 95 to 247; sequence YIAMDCEFVG…EDARATMLIY (153 aa).

This sequence belongs to the REXO4 family.

It is found in the nucleus. In terms of biological role, exoribonuclease involved in ribosome biosynthesis. Involved in the processing of ITS1, the internal transcribed spacer localized between the 18S and 5.8S rRNAs. This chain is RNA exonuclease 4 (REX4), found in Candida glabrata (strain ATCC 2001 / BCRC 20586 / JCM 3761 / NBRC 0622 / NRRL Y-65 / CBS 138) (Yeast).